We begin with the raw amino-acid sequence, 101 residues long: Small ribosomal subunit protein uS14 (101 aa).

The protein belongs to the universal ribosomal protein uS14 family. As to quaternary structure, part of the 30S ribosomal subunit. Contacts proteins S3 and S10.

Binds 16S rRNA, required for the assembly of 30S particles and may also be responsible for determining the conformation of the 16S rRNA at the A site. The protein is Small ribosomal subunit protein uS14 of Psychrobacter arcticus (strain DSM 17307 / VKM B-2377 / 273-4).